The following is a 543-amino-acid chain: CTP synthase (543 aa).

An amidoligase domain region spans residues 1 to 265; that stretch reads MTKFIFVTGG…DRLVTDRFRI (265 aa). Residue Ser13 coordinates CTP. Ser13 provides a ligand contact to UTP. ATP-binding positions include 14–19 and Asp71; that span reads SLGKGI. 2 residues coordinate Mg(2+): Asp71 and Glu139. CTP is bound by residues 146-148, 186-191, and Lys222; these read DIE and KTKPTQ. UTP-binding positions include 186-191 and Lys222; that span reads KTKPTQ. In terms of domain architecture, Glutamine amidotransferase type-1 spans 290–541; it reads EIAMVGKYVD…VEAASQHKQT (252 aa). L-glutamine is bound at residue Gly351. Cys378 serves as the catalytic Nucleophile; for glutamine hydrolysis. L-glutamine is bound by residues 379 to 382, Glu402, and Arg469; that span reads LGMQ. Active-site residues include His514 and Glu516.

This sequence belongs to the CTP synthase family. Homotetramer.

The catalysed reaction is UTP + L-glutamine + ATP + H2O = CTP + L-glutamate + ADP + phosphate + 2 H(+). It catalyses the reaction L-glutamine + H2O = L-glutamate + NH4(+). It carries out the reaction UTP + NH4(+) + ATP = CTP + ADP + phosphate + 2 H(+). Its pathway is pyrimidine metabolism; CTP biosynthesis via de novo pathway; CTP from UDP: step 2/2. With respect to regulation, allosterically activated by GTP, when glutamine is the substrate; GTP has no effect on the reaction when ammonia is the substrate. The allosteric effector GTP functions by stabilizing the protein conformation that binds the tetrahedral intermediate(s) formed during glutamine hydrolysis. Inhibited by the product CTP, via allosteric rather than competitive inhibition. Catalyzes the ATP-dependent amination of UTP to CTP with either L-glutamine or ammonia as the source of nitrogen. Regulates intracellular CTP levels through interactions with the four ribonucleotide triphosphates. This chain is CTP synthase, found in Hydrogenovibrio crunogenus (strain DSM 25203 / XCL-2) (Thiomicrospira crunogena).